The sequence spans 117 residues: Large ribosomal subunit protein bL20c (117 aa).

This sequence belongs to the bacterial ribosomal protein bL20 family.

It localises to the plastid. Its subcellular location is the chloroplast. Functionally, binds directly to 23S ribosomal RNA and is necessary for the in vitro assembly process of the 50S ribosomal subunit. It is not involved in the protein synthesizing functions of that subunit. The polypeptide is Large ribosomal subunit protein bL20c (Aethionema grandiflorum (Persian stone-cress)).